We begin with the raw amino-acid sequence, 367 residues long: Probable alcohol dehydrogenase adh (367 aa).

Residues Cys-43, His-64, Cys-97, Cys-100, Cys-103, Cys-111, and Asn-163 each coordinate Zn(2+).

This sequence belongs to the zinc-containing alcohol dehydrogenase family. Requires Zn(2+) as cofactor.

It catalyses the reaction a primary alcohol + NAD(+) = an aldehyde + NADH + H(+). The enzyme catalyses a secondary alcohol + NAD(+) = a ketone + NADH + H(+). This is Probable alcohol dehydrogenase adh (adh) from Mycobacterium tuberculosis (strain CDC 1551 / Oshkosh).